The following is a 408-amino-acid chain: Dual-specificity RNA methyltransferase RlmN (408 aa).

Catalysis depends on Glu126, which acts as the Proton acceptor. In terms of domain architecture, Radical SAM core spans 132-373 (EEGRGTLCLS…NQAGYASPIR (242 aa)). A disulfide bond links Cys139 and Cys384. The [4Fe-4S] cluster site is built by Cys146, Cys150, and Cys153. S-adenosyl-L-methionine contacts are provided by residues 210–211 (GE), Ser242, 264–266 (SLH), and Asn341. The active-site S-methylcysteine intermediate is Cys384.

It belongs to the radical SAM superfamily. RlmN family. It depends on [4Fe-4S] cluster as a cofactor.

It is found in the cytoplasm. It catalyses the reaction adenosine(2503) in 23S rRNA + 2 reduced [2Fe-2S]-[ferredoxin] + 2 S-adenosyl-L-methionine = 2-methyladenosine(2503) in 23S rRNA + 5'-deoxyadenosine + L-methionine + 2 oxidized [2Fe-2S]-[ferredoxin] + S-adenosyl-L-homocysteine. The catalysed reaction is adenosine(37) in tRNA + 2 reduced [2Fe-2S]-[ferredoxin] + 2 S-adenosyl-L-methionine = 2-methyladenosine(37) in tRNA + 5'-deoxyadenosine + L-methionine + 2 oxidized [2Fe-2S]-[ferredoxin] + S-adenosyl-L-homocysteine. Specifically methylates position 2 of adenine 2503 in 23S rRNA and position 2 of adenine 37 in tRNAs. m2A2503 modification seems to play a crucial role in the proofreading step occurring at the peptidyl transferase center and thus would serve to optimize ribosomal fidelity. The polypeptide is Dual-specificity RNA methyltransferase RlmN (Bartonella tribocorum (strain CIP 105476 / IBS 506)).